We begin with the raw amino-acid sequence, 359 residues long: Alanine racemase (359 aa).

Lysine 35 acts as the Proton acceptor; specific for D-alanine in catalysis. The residue at position 35 (lysine 35) is an N6-(pyridoxal phosphate)lysine. Arginine 131 is a substrate binding site. The active-site Proton acceptor; specific for L-alanine is tyrosine 253. Methionine 301 lines the substrate pocket.

It belongs to the alanine racemase family. Pyridoxal 5'-phosphate serves as cofactor.

It catalyses the reaction L-alanine = D-alanine. The protein operates within amino-acid biosynthesis; D-alanine biosynthesis; D-alanine from L-alanine: step 1/1. In terms of biological role, catalyzes the interconversion of L-alanine and D-alanine. May also act on other amino acids. The protein is Alanine racemase (alr) of Laribacter hongkongensis (strain HLHK9).